Here is a 112-residue protein sequence, read N- to C-terminus: UPF0212 protein Mboo_1659 (112 aa).

Belongs to the UPF0212 family.

This Methanoregula boonei (strain DSM 21154 / JCM 14090 / 6A8) protein is UPF0212 protein Mboo_1659.